A 61-amino-acid polypeptide reads, in one-letter code: Large ribosomal subunit protein eL37 (61 aa).

4 residues coordinate Zn(2+): Cys-19, Cys-22, Cys-34, and Cys-37. Residues 19–37 form a C4-type zinc finger; the sequence is CRRCGRNAYNVSKHYCAAC.

This sequence belongs to the eukaryotic ribosomal protein eL37 family. Requires Zn(2+) as cofactor.

Functionally, binds to the 23S rRNA. The polypeptide is Large ribosomal subunit protein eL37 (rpl37e) (Saccharolobus solfataricus (strain ATCC 35092 / DSM 1617 / JCM 11322 / P2) (Sulfolobus solfataricus)).